The following is a 269-amino-acid chain: 4-hydroxy-tetrahydrodipicolinate reductase (269 aa).

NAD(+) contacts are provided by residues 8 to 13 (GAAGRM), E34, 98 to 100 (GTT), and 122 to 125 (APNY). Catalysis depends on H155, which acts as the Proton donor/acceptor. Position 156 (H156) interacts with (S)-2,3,4,5-tetrahydrodipicolinate. K159 acts as the Proton donor in catalysis. 165 to 166 (GT) provides a ligand contact to (S)-2,3,4,5-tetrahydrodipicolinate.

The protein belongs to the DapB family.

The protein localises to the cytoplasm. The catalysed reaction is (S)-2,3,4,5-tetrahydrodipicolinate + NAD(+) + H2O = (2S,4S)-4-hydroxy-2,3,4,5-tetrahydrodipicolinate + NADH + H(+). It catalyses the reaction (S)-2,3,4,5-tetrahydrodipicolinate + NADP(+) + H2O = (2S,4S)-4-hydroxy-2,3,4,5-tetrahydrodipicolinate + NADPH + H(+). The protein operates within amino-acid biosynthesis; L-lysine biosynthesis via DAP pathway; (S)-tetrahydrodipicolinate from L-aspartate: step 4/4. Its function is as follows. Catalyzes the conversion of 4-hydroxy-tetrahydrodipicolinate (HTPA) to tetrahydrodipicolinate. The protein is 4-hydroxy-tetrahydrodipicolinate reductase of Aliivibrio salmonicida (strain LFI1238) (Vibrio salmonicida (strain LFI1238)).